Reading from the N-terminus, the 148-residue chain is RxLR effector protein SFI7 (148 aa).

The first 22 residues, M1 to A22, serve as a signal peptide directing secretion. N32 carries N-linked (GlcNAc...) asparagine glycosylation. Positions R44–R58 match the RxLR-dEER motif.

Belongs to the RxLR effector family.

Its subcellular location is the secreted. The protein resides in the host cytoplasm. It is found in the host cell membrane. Its function is as follows. Effector that suppresses flg22-induced post-translational MAP kinase activation in tomato but not in Arabidopsis. The perception of highly conserved pathogen- or microbe-associated molecular patterns (PAMPs/MAMPs), such as flg22, triggers converging signaling pathways recruiting MAP kinase cascades and inducing transcriptional re-programming, yielding a generic antimicrobial response. Also partially attenuates INF1-triggered cell death. This is RxLR effector protein SFI7 from Phytophthora infestans (strain T30-4) (Potato late blight agent).